The following is a 382-amino-acid chain: Flap endonuclease 1 (382 aa).

The tract at residues 1–104 is N-domain; that stretch reads MGILGLSKLI…GELAKRAERR (104 aa). Aspartate 34 is a binding site for Mg(2+). Arginine 47 and arginine 70 together coordinate DNA. Aspartate 86 serves as a coordination point for Mg(2+). Residues 95 to 118 form a disordered region; it reads GELAKRAERREDAQKALEKATEAG. Basic and acidic residues predominate over residues 96–115; sequence ELAKRAERREDAQKALEKAT. The tract at residues 122-253 is I-domain; sequence DMDKFNRRLV…KRATELMNSY (132 aa). Glutamate 158, glutamate 160, aspartate 179, and aspartate 181 together coordinate Mg(2+). Glutamate 158 serves as a coordination point for DNA. Glycine 231 and aspartate 233 together coordinate DNA. Aspartate 233 is a Mg(2+) binding site. Positions 336-344 are interaction with PCNA; it reads TQGRLDSFF. Residues 353–382 form a disordered region; sequence TTPKRKADDKNNVQQKKSKTAGNTKGKRPK. A compositionally biased stretch (polar residues) spans 364–375; the sequence is NVQQKKSKTAGN.

It belongs to the XPG/RAD2 endonuclease family. FEN1 subfamily. Interacts with PCNA. Three molecules of FEN1 bind to one PCNA trimer with each molecule binding to one PCNA monomer. PCNA stimulates the nuclease activity without altering cleavage specificity. Mg(2+) is required as a cofactor. Post-translationally, phosphorylated. Phosphorylation upon DNA damage induces relocalization to the nuclear plasma.

It localises to the nucleus. Its subcellular location is the nucleolus. The protein resides in the nucleoplasm. The protein localises to the mitochondrion. In terms of biological role, structure-specific nuclease with 5'-flap endonuclease and 5'-3' exonuclease activities involved in DNA replication and repair. During DNA replication, cleaves the 5'-overhanging flap structure that is generated by displacement synthesis when DNA polymerase encounters the 5'-end of a downstream Okazaki fragment. It enters the flap from the 5'-end and then tracks to cleave the flap base, leaving a nick for ligation. Also involved in the long patch base excision repair (LP-BER) pathway, by cleaving within the apurinic/apyrimidinic (AP) site-terminated flap. Acts as a genome stabilization factor that prevents flaps from equilibrating into structures that lead to duplications and deletions. Also possesses 5'-3' exonuclease activity on nicked or gapped double-stranded DNA, and exhibits RNase H activity. Also involved in replication and repair of rDNA and in repairing mitochondrial DNA. The sequence is that of Flap endonuclease 1 from Glossina morsitans morsitans (Savannah tsetse fly).